The following is a 435-amino-acid chain: Methionine aminopeptidase 2 (435 aa).

The disordered stretch occupies residues 1–87 (MAAQVADGVA…TQTKPPRVPV (87 aa)). A compositionally biased stretch (basic and acidic residues) spans 10–19 (ADLKLDDTKS). A compositionally biased stretch (polar residues) spans 20–29 (KPTNGTTQNG). Residues 32–46 (EHEDSDDDNEGEEGA) show a composition bias toward acidic residues. Over residues 55 to 68 (KKKKKRKPRKKKKA) the composition is skewed to basic residues. Residue His-199 coordinates substrate. Positions 219, 230, and 299 each coordinate a divalent metal cation. Residue His-307 participates in substrate binding. 2 residues coordinate a divalent metal cation: Glu-332 and Glu-427.

It belongs to the peptidase M24A family. Methionine aminopeptidase eukaryotic type 2 subfamily. Co(2+) is required as a cofactor. The cofactor is Zn(2+). It depends on Mn(2+) as a cofactor. Requires Fe(2+) as cofactor.

It localises to the cytoplasm. It carries out the reaction Release of N-terminal amino acids, preferentially methionine, from peptides and arylamides.. Functionally, cotranslationally removes the N-terminal methionine from nascent proteins. The N-terminal methionine is often cleaved when the second residue in the primary sequence is small and uncharged (Met-Ala-, Cys, Gly, Pro, Ser, Thr, or Val). This chain is Methionine aminopeptidase 2, found in Phaeosphaeria nodorum (strain SN15 / ATCC MYA-4574 / FGSC 10173) (Glume blotch fungus).